The chain runs to 500 residues: Glycerol kinase (500 aa).

Thr-13 is an ADP binding site. Positions 13, 14, and 15 each coordinate ATP. Thr-13 lines the sn-glycerol 3-phosphate pocket. Position 17 (Arg-17) interacts with ADP. 4 residues coordinate sn-glycerol 3-phosphate: Arg-83, Glu-84, Tyr-135, and Asp-244. Glycerol-binding residues include Arg-83, Glu-84, Tyr-135, Asp-244, and Gln-245. 4 residues coordinate ADP: Thr-266, Gly-309, Gly-410, and Asn-414. ATP contacts are provided by Thr-266, Gly-309, and Gly-410.

This sequence belongs to the FGGY kinase family.

It catalyses the reaction glycerol + ATP = sn-glycerol 3-phosphate + ADP + H(+). It participates in polyol metabolism; glycerol degradation via glycerol kinase pathway; sn-glycerol 3-phosphate from glycerol: step 1/1. Its activity is regulated as follows. Inhibited by fructose 1,6-bisphosphate (FBP). In terms of biological role, key enzyme in the regulation of glycerol uptake and metabolism. Catalyzes the phosphorylation of glycerol to yield sn-glycerol 3-phosphate. This is Glycerol kinase from Chromobacterium violaceum (strain ATCC 12472 / DSM 30191 / JCM 1249 / CCUG 213 / NBRC 12614 / NCIMB 9131 / NCTC 9757 / MK).